The primary structure comprises 472 residues: UDP-N-acetylmuramoyl-L-alanyl-D-glutamate--2,6-diaminopimelate ligase (472 aa).

Position 21 (S21) interacts with UDP-N-acetyl-alpha-D-muramoyl-L-alanyl-D-glutamate. Residue 99–105 (GTNGKTS) coordinates ATP. UDP-N-acetyl-alpha-D-muramoyl-L-alanyl-D-glutamate-binding positions include 143–144 (TT), S170, Q176, and R178. K210 bears the N6-carboxylysine mark. Residues R367, 391–394 (DNPR), G440, and E444 each bind meso-2,6-diaminopimelate. The Meso-diaminopimelate recognition motif motif lies at 391–394 (DNPR).

Belongs to the MurCDEF family. MurE subfamily. Requires Mg(2+) as cofactor. Post-translationally, carboxylation is probably crucial for Mg(2+) binding and, consequently, for the gamma-phosphate positioning of ATP.

The protein resides in the cytoplasm. The enzyme catalyses UDP-N-acetyl-alpha-D-muramoyl-L-alanyl-D-glutamate + meso-2,6-diaminopimelate + ATP = UDP-N-acetyl-alpha-D-muramoyl-L-alanyl-gamma-D-glutamyl-meso-2,6-diaminopimelate + ADP + phosphate + H(+). It participates in cell wall biogenesis; peptidoglycan biosynthesis. In terms of biological role, catalyzes the addition of meso-diaminopimelic acid to the nucleotide precursor UDP-N-acetylmuramoyl-L-alanyl-D-glutamate (UMAG) in the biosynthesis of bacterial cell-wall peptidoglycan. In Anaplasma marginale (strain St. Maries), this protein is UDP-N-acetylmuramoyl-L-alanyl-D-glutamate--2,6-diaminopimelate ligase.